The sequence spans 157 residues: Endoribonuclease YbeY (157 aa).

3 residues coordinate Zn(2+): His-113, His-117, and His-123.

It belongs to the endoribonuclease YbeY family. It depends on Zn(2+) as a cofactor.

The protein localises to the cytoplasm. In terms of biological role, single strand-specific metallo-endoribonuclease involved in late-stage 70S ribosome quality control and in maturation of the 3' terminus of the 16S rRNA. The polypeptide is Endoribonuclease YbeY (Ehrlichia ruminantium (strain Welgevonden)).